A 503-amino-acid polypeptide reads, in one-letter code: Aspartyl/glutamyl-tRNA(Asn/Gln) amidotransferase subunit B (503 aa).

Belongs to the GatB/GatE family. GatB subfamily. Heterotrimer of A, B and C subunits.

The catalysed reaction is L-glutamyl-tRNA(Gln) + L-glutamine + ATP + H2O = L-glutaminyl-tRNA(Gln) + L-glutamate + ADP + phosphate + H(+). It catalyses the reaction L-aspartyl-tRNA(Asn) + L-glutamine + ATP + H2O = L-asparaginyl-tRNA(Asn) + L-glutamate + ADP + phosphate + 2 H(+). Functionally, allows the formation of correctly charged Asn-tRNA(Asn) or Gln-tRNA(Gln) through the transamidation of misacylated Asp-tRNA(Asn) or Glu-tRNA(Gln) in organisms which lack either or both of asparaginyl-tRNA or glutaminyl-tRNA synthetases. The reaction takes place in the presence of glutamine and ATP through an activated phospho-Asp-tRNA(Asn) or phospho-Glu-tRNA(Gln). In Roseobacter denitrificans (strain ATCC 33942 / OCh 114) (Erythrobacter sp. (strain OCh 114)), this protein is Aspartyl/glutamyl-tRNA(Asn/Gln) amidotransferase subunit B.